A 657-amino-acid polypeptide reads, in one-letter code: Threonine--tRNA ligase (657 aa).

The TGS domain maps to Gln-7–Thr-70. A catalytic region spans residues Asp-253–Pro-555. 3 residues coordinate Zn(2+): Cys-351, His-402, and His-532.

The protein belongs to the class-II aminoacyl-tRNA synthetase family. As to quaternary structure, homodimer. Requires Zn(2+) as cofactor.

It localises to the cytoplasm. It catalyses the reaction tRNA(Thr) + L-threonine + ATP = L-threonyl-tRNA(Thr) + AMP + diphosphate + H(+). Its function is as follows. Catalyzes the attachment of threonine to tRNA(Thr) in a two-step reaction: L-threonine is first activated by ATP to form Thr-AMP and then transferred to the acceptor end of tRNA(Thr). Also edits incorrectly charged L-seryl-tRNA(Thr). In Chlorobium limicola (strain DSM 245 / NBRC 103803 / 6330), this protein is Threonine--tRNA ligase.